A 198-amino-acid chain; its full sequence is Holliday junction resolvase RecU (198 aa).

Positions Met-1 to Asn-22 are disordered. Polar residues predominate over residues Gln-11 to Asn-22. Positions 81, 83, 96, and 115 each coordinate Mg(2+).

The protein belongs to the RecU family. Requires Mg(2+) as cofactor.

Its subcellular location is the cytoplasm. The enzyme catalyses Endonucleolytic cleavage at a junction such as a reciprocal single-stranded crossover between two homologous DNA duplexes (Holliday junction).. Functionally, endonuclease that resolves Holliday junction intermediates in genetic recombination. Cleaves mobile four-strand junctions by introducing symmetrical nicks in paired strands. Promotes annealing of linear ssDNA with homologous dsDNA. Required for DNA repair, homologous recombination and chromosome segregation. The polypeptide is Holliday junction resolvase RecU (Streptococcus pneumoniae serotype 2 (strain D39 / NCTC 7466)).